A 61-amino-acid chain; its full sequence is MAKKTIRVRQTGSAIRRPKDQRATLVGLGLNKIGRERELEDTPSVRGMIAKVSHMVEIVEE.

This sequence belongs to the universal ribosomal protein uL30 family. Part of the 50S ribosomal subunit.

This Maricaulis maris (strain MCS10) (Caulobacter maris) protein is Large ribosomal subunit protein uL30.